Here is a 144-residue protein sequence, read N- to C-terminus: Large ribosomal subunit protein uL16 (144 aa).

Belongs to the universal ribosomal protein uL16 family. Part of the 50S ribosomal subunit.

Functionally, binds 23S rRNA and is also seen to make contacts with the A and possibly P site tRNAs. The chain is Large ribosomal subunit protein uL16 from Lysinibacillus sphaericus (strain C3-41).